We begin with the raw amino-acid sequence, 98 residues long: Cystatin-A (98 aa).

Met1 is modified (N-acetylmethionine). Residues 46 to 50 (QVVAG) carry the Secondary area of contact motif.

The protein belongs to the cystatin family. Expressed in the skin throughout the epidermis.

It is found in the cytoplasm. In terms of biological role, this is an intracellular thiol proteinase inhibitor. Has an important role in desmosome-mediated cell-cell adhesion in the lower levels of the epidermis. In Homo sapiens (Human), this protein is Cystatin-A (CSTA).